We begin with the raw amino-acid sequence, 340 residues long: 4-hydroxythreonine-4-phosphate dehydrogenase (340 aa).

Substrate is bound by residues H141 and T142. The a divalent metal cation site is built by H171, H216, and H271. Substrate is bound by residues K279, N288, and R297.

This sequence belongs to the PdxA family. Homodimer. Zn(2+) serves as cofactor. The cofactor is Mg(2+). Co(2+) is required as a cofactor.

It localises to the cytoplasm. It catalyses the reaction 4-(phosphooxy)-L-threonine + NAD(+) = 3-amino-2-oxopropyl phosphate + CO2 + NADH. It participates in cofactor biosynthesis; pyridoxine 5'-phosphate biosynthesis; pyridoxine 5'-phosphate from D-erythrose 4-phosphate: step 4/5. Its function is as follows. Catalyzes the NAD(P)-dependent oxidation of 4-(phosphooxy)-L-threonine (HTP) into 2-amino-3-oxo-4-(phosphooxy)butyric acid which spontaneously decarboxylates to form 3-amino-2-oxopropyl phosphate (AHAP). The polypeptide is 4-hydroxythreonine-4-phosphate dehydrogenase (Desulforapulum autotrophicum (strain ATCC 43914 / DSM 3382 / VKM B-1955 / HRM2) (Desulfobacterium autotrophicum)).